Here is a 78-residue protein sequence, read N- to C-terminus: Large ribosomal subunit protein bL28 (78 aa).

The interval 1 to 27 (MSAYCQVTGRKPSFGKSVSHSHRRTNR) is disordered.

This sequence belongs to the bacterial ribosomal protein bL28 family.

This is Large ribosomal subunit protein bL28 from Corynebacterium kroppenstedtii (strain DSM 44385 / JCM 11950 / CIP 105744 / CCUG 35717).